Reading from the N-terminus, the 225-residue chain is GTP cyclohydrolase III (225 aa).

It belongs to the archaeal-type GTP cyclohydrolase family.

The enzyme catalyses GTP + 3 H2O = 2-amino-5-formylamino-6-(5-phospho-D-ribosylamino)pyrimidin-4(3H)-one + 2 phosphate + 2 H(+). Functionally, catalyzes the formation of 2-amino-5-formylamino-6-ribofuranosylamino-4(3H)-pyrimidinone ribonucleotide monophosphate and inorganic phosphate from GTP. Also has an independent pyrophosphate phosphohydrolase activity. This chain is GTP cyclohydrolase III, found in Sulfurisphaera tokodaii (strain DSM 16993 / JCM 10545 / NBRC 100140 / 7) (Sulfolobus tokodaii).